We begin with the raw amino-acid sequence, 98 residues long: NADH-ubiquinone oxidoreductase chain 4L (98 aa).

The next 3 helical transmembrane spans lie at 1–21 (MPPI…GMLV), 29–49 (SLLC…TMAL), and 61–81 (IVLL…LVMV).

The protein belongs to the complex I subunit 4L family. In terms of assembly, core subunit of respiratory chain NADH dehydrogenase (Complex I) which is composed of 45 different subunits.

It localises to the mitochondrion inner membrane. It catalyses the reaction a ubiquinone + NADH + 5 H(+)(in) = a ubiquinol + NAD(+) + 4 H(+)(out). Functionally, core subunit of the mitochondrial membrane respiratory chain NADH dehydrogenase (Complex I) which catalyzes electron transfer from NADH through the respiratory chain, using ubiquinone as an electron acceptor. Part of the enzyme membrane arm which is embedded in the lipid bilayer and involved in proton translocation. The polypeptide is NADH-ubiquinone oxidoreductase chain 4L (MT-ND4L) (Orycteropus afer (Aardvark)).